The following is a 484-amino-acid chain: Aldehyde dehydrogenase family 3 member A2 (484 aa).

The Cytoplasmic portion of the chain corresponds to 1–463 (MERQVQRLRQ…FLLKQFNKGR (463 aa)). 185–190 (GNTAVG) serves as a coordination point for NAD(+). Catalysis depends on residues E207 and C241. S293 carries the post-translational modification Phosphoserine. The helical transmembrane segment at 464–484 (LQLLLLVCLVAVAAVIVKDQL) threads the bilayer. The short motif at 481–484 (KDQL) is the Prevents secretion from ER element.

This sequence belongs to the aldehyde dehydrogenase family. Homodimer. Post-translationally, the N-terminus is blocked.

Its subcellular location is the microsome membrane. It localises to the endoplasmic reticulum membrane. The enzyme catalyses an aldehyde + NAD(+) + H2O = a carboxylate + NADH + 2 H(+). It carries out the reaction a fatty aldehyde + NAD(+) + H2O = a fatty acid + NADH + 2 H(+). It catalyses the reaction (2E)-hexadecenal + NAD(+) + H2O = (E)-hexadec-2-enoate + NADH + 2 H(+). The catalysed reaction is hexadecanoate + NADH + 2 H(+) = hexadecanal + NAD(+) + H2O. The enzyme catalyses 22-oxodocosanoate + NAD(+) + H2O = docosanedioate + NADH + 2 H(+). It carries out the reaction 2,6,10,14-tetramethylpentadecanal + NAD(+) + H2O = 2,6,10,14-tetramethylpentadecanoate + NADH + 2 H(+). It catalyses the reaction octadecanal + NAD(+) + H2O = octadecanoate + NADH + 2 H(+). The catalysed reaction is dodecanoate + NADH + 2 H(+) = dodecanal + NAD(+) + H2O. The enzyme catalyses decanal + NAD(+) + H2O = decanoate + NADH + 2 H(+). It carries out the reaction tetradecanal + NAD(+) + H2O = tetradecanoate + NADH + 2 H(+). It catalyses the reaction octanal + NAD(+) + H2O = octanoate + NADH + 2 H(+). The catalysed reaction is heptanal + NAD(+) + H2O = heptanoate + NADH + 2 H(+). The enzyme catalyses (2E,6E)-farnesal + NAD(+) + H2O = (2E,6E)-farnesoate + NADH + 2 H(+). Catalyzes the oxidation of medium and long-chain aliphatic aldehydes to fatty acids. Active on a variety of saturated and unsaturated aliphatic aldehydes between 6 and 24 carbons in length. Responsible for conversion of the sphingosine 1-phosphate (S1P) degradation product hexadecenal to hexadecenoic acid. In Rattus norvegicus (Rat), this protein is Aldehyde dehydrogenase family 3 member A2 (Aldh3a2).